We begin with the raw amino-acid sequence, 205 residues long: Large ribosomal subunit protein uL18 (205 aa).

It belongs to the universal ribosomal protein uL18 family. In terms of assembly, part of the 50S ribosomal subunit. Contacts the 5S and 23S rRNAs.

Its function is as follows. This is one of the proteins that bind and probably mediate the attachment of the 5S RNA into the large ribosomal subunit, where it forms part of the central protuberance. In Pyrobaculum aerophilum (strain ATCC 51768 / DSM 7523 / JCM 9630 / CIP 104966 / NBRC 100827 / IM2), this protein is Large ribosomal subunit protein uL18.